We begin with the raw amino-acid sequence, 373 residues long: Probable tRNA sulfurtransferase (373 aa).

The THUMP domain maps to 54 to 158 (NKNIEELSKV…NDVAYFYHKI (105 aa)). Residues 176-177 (LF), 201-202 (NF), lysine 256, glycine 278, and glutamine 287 each bind ATP.

Belongs to the ThiI family.

The protein localises to the cytoplasm. It catalyses the reaction [ThiI sulfur-carrier protein]-S-sulfanyl-L-cysteine + a uridine in tRNA + 2 reduced [2Fe-2S]-[ferredoxin] + ATP + H(+) = [ThiI sulfur-carrier protein]-L-cysteine + a 4-thiouridine in tRNA + 2 oxidized [2Fe-2S]-[ferredoxin] + AMP + diphosphate. The enzyme catalyses [ThiS sulfur-carrier protein]-C-terminal Gly-Gly-AMP + S-sulfanyl-L-cysteinyl-[cysteine desulfurase] + AH2 = [ThiS sulfur-carrier protein]-C-terminal-Gly-aminoethanethioate + L-cysteinyl-[cysteine desulfurase] + A + AMP + 2 H(+). It functions in the pathway cofactor biosynthesis; thiamine diphosphate biosynthesis. In terms of biological role, catalyzes the ATP-dependent transfer of a sulfur to tRNA to produce 4-thiouridine in position 8 of tRNAs, which functions as a near-UV photosensor. Also catalyzes the transfer of sulfur to the sulfur carrier protein ThiS, forming ThiS-thiocarboxylate. This is a step in the synthesis of thiazole, in the thiamine biosynthesis pathway. The sulfur is donated as persulfide by IscS. This Saccharolobus islandicus (strain M.14.25 / Kamchatka #1) (Sulfolobus islandicus) protein is Probable tRNA sulfurtransferase.